The following is a 345-amino-acid chain: GTPase Obg (345 aa).

An Obg domain is found at 1–158; it reads MFIDSVKITL…RLVRLELKLI (158 aa). Residues 159-339 enclose the OBG-type G domain; that stretch reads ADVGLVGFPN…LKFMLLEEIK (181 aa). Residues 165-172, 190-194, 212-215, 280-283, and 320-322 contribute to the GTP site; these read GFPNVGKS, FTTLT, DIPG, SKSD, and SSL. Residues serine 172 and threonine 192 each contribute to the Mg(2+) site.

It belongs to the TRAFAC class OBG-HflX-like GTPase superfamily. OBG GTPase family. Monomer. The cofactor is Mg(2+).

The protein resides in the cytoplasm. An essential GTPase which binds GTP, GDP and possibly (p)ppGpp with moderate affinity, with high nucleotide exchange rates and a fairly low GTP hydrolysis rate. Plays a role in control of the cell cycle, stress response, ribosome biogenesis and in those bacteria that undergo differentiation, in morphogenesis control. The chain is GTPase Obg from Campylobacter jejuni subsp. doylei (strain ATCC BAA-1458 / RM4099 / 269.97).